Here is a 268-residue protein sequence, read N- to C-terminus: 4-hydroxy-tetrahydrodipicolinate reductase (268 aa).

Residues 10 to 15 (GASGRM) and aspartate 36 each bind NAD(+). An NADP(+)-binding site is contributed by arginine 37. NAD(+) contacts are provided by residues 99–101 (GTT) and 123–126 (SANM). The active-site Proton donor/acceptor is histidine 156. Histidine 157 serves as a coordination point for (S)-2,3,4,5-tetrahydrodipicolinate. The active-site Proton donor is the lysine 160. 166–167 (GT) serves as a coordination point for (S)-2,3,4,5-tetrahydrodipicolinate.

Belongs to the DapB family.

It is found in the cytoplasm. It catalyses the reaction (S)-2,3,4,5-tetrahydrodipicolinate + NAD(+) + H2O = (2S,4S)-4-hydroxy-2,3,4,5-tetrahydrodipicolinate + NADH + H(+). It carries out the reaction (S)-2,3,4,5-tetrahydrodipicolinate + NADP(+) + H2O = (2S,4S)-4-hydroxy-2,3,4,5-tetrahydrodipicolinate + NADPH + H(+). It functions in the pathway amino-acid biosynthesis; L-lysine biosynthesis via DAP pathway; (S)-tetrahydrodipicolinate from L-aspartate: step 4/4. Functionally, catalyzes the conversion of 4-hydroxy-tetrahydrodipicolinate (HTPA) to tetrahydrodipicolinate. The protein is 4-hydroxy-tetrahydrodipicolinate reductase of Burkholderia thailandensis (strain ATCC 700388 / DSM 13276 / CCUG 48851 / CIP 106301 / E264).